Consider the following 919-residue polypeptide: Calcium-activated chloride channel regulator 4 (919 aa).

The signal sequence occupies residues 1–21 (MGLFRGFVFLLVLCLLHQSNT). The metalloprotease domain stretch occupies residues 45–199 (DEKIIEQIED…GISGRNRVYK (155 aa)). N75 is a glycosylation site (N-linked (GlcNAc...) asparagine). Residue H155 coordinates Zn(2+). Residue E156 is part of the active site. Zn(2+) contacts are provided by H159 and D166. Residues 306 to 476 (IVCLVLDKSG…NGLIDAFGAL (171 aa)) form the VWFA domain. Residues N340, N504, N542, N588, N628, N811, N832, N837, and N852 are each glycosylated (N-linked (GlcNAc...) asparagine). Residues 870–893 (ANPDDIDPTPTPTPTPTPDKSHNS) are disordered. A helical transmembrane segment spans residues 895-915 (VNISTLVLSVIGSVVIVNFIL).

The protein belongs to the CLCR family. Post-translationally, the translation product is autoproteolytically cleaved by the metalloprotease domain in the endoplasmic reticulum into a N-terminal and a C-terminal products that remain physically associated with each other. The cleavage is necessary for calcium-activated chloride channel (CaCC) activation activity. As to expression, primarily expressed in the digestive tract, mainly in colon. Detected in smaller amounts in brain, urogenital organs, testis, and salivary and mammary glands. Highly expressed in the epithelial layer and submucosal gland of the inferior turbinate mucosa. Lower levels in the epithelial layer of nasal polyp.

It is found in the cell membrane. Its subcellular location is the apical cell membrane. The protein localises to the secreted. Functionally, may be involved in mediating calcium-activated chloride conductance. The chain is Calcium-activated chloride channel regulator 4 (CLCA4) from Homo sapiens (Human).